Reading from the N-terminus, the 478-residue chain is Ribulose bisphosphate carboxylase large chain (478 aa).

A propeptide spanning residues 1–2 (MS) is cleaved from the precursor. Residues asparagine 123 and threonine 173 each contribute to the substrate site. Catalysis depends on lysine 175, which acts as the Proton acceptor. Lysine 177 lines the substrate pocket. Mg(2+) is bound by residues lysine 201, aspartate 203, and glutamate 204. Lysine 201 bears the N6-carboxylysine mark. At serine 208 the chain carries Phosphoserine. The Proton acceptor role is filled by histidine 294. Substrate contacts are provided by arginine 295 and histidine 327. The residue at position 330 (threonine 330) is a Phosphothreonine. Serine 379 serves as a coordination point for substrate.

The protein belongs to the RuBisCO large chain family. Type I subfamily. As to quaternary structure, heterohexadecamer of 8 large chains and 8 small chains; disulfide-linked. The disulfide link is formed within the large subunit homodimers. It depends on Mg(2+) as a cofactor. Post-translationally, the disulfide bond which can form in the large chain dimeric partners within the hexadecamer appears to be associated with oxidative stress and protein turnover.

It localises to the plastid. The protein localises to the chloroplast. The enzyme catalyses 2 (2R)-3-phosphoglycerate + 2 H(+) = D-ribulose 1,5-bisphosphate + CO2 + H2O. The catalysed reaction is D-ribulose 1,5-bisphosphate + O2 = 2-phosphoglycolate + (2R)-3-phosphoglycerate + 2 H(+). Functionally, ruBisCO catalyzes two reactions: the carboxylation of D-ribulose 1,5-bisphosphate, the primary event in carbon dioxide fixation, as well as the oxidative fragmentation of the pentose substrate in the photorespiration process. Both reactions occur simultaneously and in competition at the same active site. The polypeptide is Ribulose bisphosphate carboxylase large chain (Lepidium virginicum (Virginia pepperweed)).